We begin with the raw amino-acid sequence, 430 residues long: Adenylosuccinate synthetase (430 aa).

GTP-binding positions include 13–19 (GDEGKGK) and 41–43 (GHT). Asp14 functions as the Proton acceptor in the catalytic mechanism. Mg(2+)-binding residues include Asp14 and Gly41. IMP is bound by residues 14–17 (DEGK), 39–42 (NAGH), Thr130, Arg144, Gln225, Thr240, and Arg304. Residue His42 is the Proton donor of the active site. 300–306 (STTGRAR) lines the substrate pocket. GTP-binding positions include Arg306, 332-334 (KLD), and 414-416 (STG).

It belongs to the adenylosuccinate synthetase family. As to quaternary structure, homodimer. It depends on Mg(2+) as a cofactor.

It localises to the cytoplasm. It carries out the reaction IMP + L-aspartate + GTP = N(6)-(1,2-dicarboxyethyl)-AMP + GDP + phosphate + 2 H(+). It functions in the pathway purine metabolism; AMP biosynthesis via de novo pathway; AMP from IMP: step 1/2. Functionally, plays an important role in the de novo pathway of purine nucleotide biosynthesis. Catalyzes the first committed step in the biosynthesis of AMP from IMP. This is Adenylosuccinate synthetase from Thioalkalivibrio sulfidiphilus (strain HL-EbGR7).